The following is a 424-amino-acid chain: Histidine--tRNA ligase (424 aa).

Belongs to the class-II aminoacyl-tRNA synthetase family. Homodimer.

The protein resides in the cytoplasm. It catalyses the reaction tRNA(His) + L-histidine + ATP = L-histidyl-tRNA(His) + AMP + diphosphate + H(+). This Protochlamydia amoebophila (strain UWE25) protein is Histidine--tRNA ligase.